We begin with the raw amino-acid sequence, 338 residues long: Ketol-acid reductoisomerase (NADP(+)) (338 aa).

A KARI N-terminal Rossmann domain is found at 1-181; that stretch reads MKVYYDKDAD…GGTKGGVIET (181 aa). Residues 24–27, R47, S52, and 82–85 contribute to the NADP(+) site; these read YGSQ and DETQ. H107 is an active-site residue. Position 133 (G133) interacts with NADP(+). One can recognise a KARI C-terminal knotted domain in the interval 182–327; that stretch reads SFREETETDL…AELRAMMPWI (146 aa). Residues D190, E194, E226, and E230 each contribute to the Mg(2+) site. S251 provides a ligand contact to substrate.

The protein belongs to the ketol-acid reductoisomerase family. It depends on Mg(2+) as a cofactor.

It catalyses the reaction (2R)-2,3-dihydroxy-3-methylbutanoate + NADP(+) = (2S)-2-acetolactate + NADPH + H(+). The enzyme catalyses (2R,3R)-2,3-dihydroxy-3-methylpentanoate + NADP(+) = (S)-2-ethyl-2-hydroxy-3-oxobutanoate + NADPH + H(+). The protein operates within amino-acid biosynthesis; L-isoleucine biosynthesis; L-isoleucine from 2-oxobutanoate: step 2/4. Its pathway is amino-acid biosynthesis; L-valine biosynthesis; L-valine from pyruvate: step 2/4. Involved in the biosynthesis of branched-chain amino acids (BCAA). Catalyzes an alkyl-migration followed by a ketol-acid reduction of (S)-2-acetolactate (S2AL) to yield (R)-2,3-dihydroxy-isovalerate. In the isomerase reaction, S2AL is rearranged via a Mg-dependent methyl migration to produce 3-hydroxy-3-methyl-2-ketobutyrate (HMKB). In the reductase reaction, this 2-ketoacid undergoes a metal-dependent reduction by NADPH to yield (R)-2,3-dihydroxy-isovalerate. The polypeptide is Ketol-acid reductoisomerase (NADP(+)) (Laribacter hongkongensis (strain HLHK9)).